The primary structure comprises 391 residues: Rhizopuspepsin-2 (391 aa).

A signal peptide spans 1-21 (MKLTLISSCVALAFMALATEA). A propeptide spans 22–68 (APSGKKLSIPLTKNTNYKPSAKNAIQKALAKYHRFRTTSSSNSTSTE) (activation peptide). One can recognise a Peptidase A1 domain in the interval 84–388 (YYGKVTVGTP…NQEVPEVQIA (305 aa)). D102 is an active-site residue. A disulfide bond links C115 and C118. D285 is a catalytic residue. A disulfide bridge connects residues C319 and C352.

The protein belongs to the peptidase A1 family.

It carries out the reaction Hydrolysis of proteins with broad specificity similar to that of pepsin A, preferring hydrophobic residues at P1 and P1'. Clots milk and activates trypsinogen. Does not cleave 4-Gln-|-His-5, but does cleave 10-His-|-Leu-11 and 12-Val-|-Glu-13 in B chain of insulin.. In Rhizopus niveus, this protein is Rhizopuspepsin-2.